We begin with the raw amino-acid sequence, 548 residues long: Multidrug efflux system permease protein Rv1217c (548 aa).

A run of 12 helical transmembrane segments spans residues 39–59 (VSLPLWVLLLSVPLATVYIAS), 99–119 (GIWKAGMFHTLIAVAVILTVI), 148–168 (ALLLSFGASIATGAIGALGLL), 178–198 (VAFGVALAASGMVFTAVAAVA), 210–230 (AVAFAVLGTAFALRAIGDAGS), 253–273 (WWVLLLSLATAAVLTVLAYRL), 313–333 (LLWTVGLCLYGLVMGSVVHGI), 359–379 (AFLALAFTMIGMVAAAFAVSL), 410–430 (LAMALAGSAVATLISGVAAGL), 450–470 (AAVQLPAVWLLSAVTVGLFGL), 477–497 (VAWGVLVGFIALYLLGSLAGF), and 521–541 (VPLLWLLAIDAALITLGAMAF).

As to quaternary structure, the complex is probably composed of two ATP-binding proteins (Rv1218c) and a transmembrane protein (Rv1217c).

It is found in the cell inner membrane. In terms of biological role, probably part of the ABC transporter complex Rv1217c-Rv1218c involved in the resistance to a wide range of structurally unrelated drugs. Probably responsible for the translocation of the substrate across the membrane. This Mycobacterium tuberculosis (strain ATCC 25618 / H37Rv) protein is Multidrug efflux system permease protein Rv1217c.